We begin with the raw amino-acid sequence, 137 residues long: Type III secretion protein HrcQb (137 aa).

Positions 1-22 are enriched in acidic residues; sequence MSTEDLYQDDVESLEDYDDETA. Residues 1–67 are disordered; it reads MSTEDLYQDD…EQQAPSGLDS (67 aa). Residues 23–33 show a composition bias toward basic and acidic residues; the sequence is EQEHEHEHEQQ. The span at 36–58 shows a compositional bias: acidic residues; sequence EPDDESEYAEAEPDDDEQEEQEE.

It belongs to the FliN/MopA/SpaO family. In terms of assembly, homotetramer. The four monomers assemble into two tightly bound homodimers. Interacts with HrcQa.

Its subcellular location is the cytoplasm. In terms of biological role, component of the type III secretion system, which is required for effector protein delivery, parasitism, and pathogenicity. Probably participates in the formation of a C-ring-like assembly along with HrcQa. This Pseudomonas syringae pv. tomato (strain ATCC BAA-871 / DC3000) protein is Type III secretion protein HrcQb (hrcQb).